Reading from the N-terminus, the 3011-residue chain is Genome polyprotein (3011 aa).

S2 is modified (N-acetylserine; by host). The interval 2–23 (STNPKPQRKTKRNTNRRPQNVK) is interaction with STAT1. The tract at residues 2 to 58 (STNPKPQRKTKRNTNRRPQNVKFPGGGQIVGGVCLLPRRGPRVGVRATRKTSERSQP) is interaction with EIF2AK2/PKR. Residues 2–59 (STNPKPQRKTKRNTNRRPQNVKFPGGGQIVGGVCLLPRRGPRVGVRATRKTSERSQPR) form an interaction with DDX3X region. The tract at residues 2–75 (STNPKPQRKT…PKARRPEGRS (74 aa)) is disordered. Residues 2–168 (STNPKPQRKT…EDGVNYATGN (167 aa)) lie on the Cytoplasmic side of the membrane. 2 consecutive short sequence motifs (nuclear localization signal) follow at residues 5–13 (PKPQRKTKR) and 38–43 (PRRGPR). The span at 7–16 (PQRKTKRNTN) shows a compositional bias: basic residues. A Phosphoserine; by host modification is found at S53. 2 short sequence motifs (nuclear localization signal) span residues 58 to 64 (PRGRRQP) and 66 to 71 (PKARRP). Residues 58 to 68 (PRGRRQPIPKA) are compositionally biased toward basic residues. S99 is subject to Phosphoserine; by host. The important for endoplasmic reticulum and mitochondrial localization stretch occupies residues 112–152 (PRRRSRNLGKVIDTLTCGFADLMGYIPLVGAPLGGAARALA). A Phosphoserine; by host PKA modification is found at S116. Positions 122–173 (VIDTLTCGFADLMGYIPLVGAPLGGAARALAHGVRVLEDGVNYATGNLPGCS) are interaction with APOA2. The segment at 164 to 167 (YATG) is important for lipid droplets localization. Residues 169–189 (LPGCSFSIFLLALLSCLTVPA) form a helical membrane-spanning segment. A propeptide spans 178-191 (LLALLSCLTVPASA) (ER anchor for the core protein, removed in mature form by host signal peptidase). Topologically, residues 190 to 358 (SAVEVRNSSG…AGAHWGVLAG (169 aa)) are lumenal. Residues N196, N209, and N234 are each glycosylated (N-linked (GlcNAc...) asparagine; by host). The interval 265-296 (IVGAAAFCSAMYVGDLCGSIFLVGQLFTLSPR) is important for fusion. A glycan (N-linked (GlcNAc...) asparagine; by host) is linked at N305. A helical membrane pass occupies residues 359-379 (PAYYSMVGNWAKVLVVLLLFA). The Lumenal portion of the chain corresponds to 380-725 (GVDATTQVTG…WEYVVLLFLL (346 aa)). The tract at residues 385–411 (TQVTGGTAGRNAYRLASLFSTGPSQNI) is HVR1. Residues N417, N423, N430, and N448 are each glycosylated (N-linked (GlcNAc...) (high mannose) asparagine; by host). Disulfide bonds link C429-C552, C486-C494, and C503-C508. Positions 474–479 (YGGKAS) are HVR2. The segment at 480–493 (NDQRPYCWHYAPRP) is CD81-binding 1. N-linked (GlcNAc...) (high mannose) asparagine; by host glycosylation occurs at N532. N540 carries an N-linked (GlcNAc...) asparagine; by host glycan. The segment at 544 to 551 (PPIGNWFG) is CD81-binding 2. The N-linked (GlcNAc...) (high mannose) asparagine; by host glycan is linked to N556. Intrachain disulfides connect C564-C569, C581-C585, C597-C620, and C607-C644. N623 and N645 each carry an N-linked (GlcNAc...) (high mannose) asparagine; by host glycan. C652 and C677 are disulfide-bonded. A PKR/eIF2-alpha phosphorylation homology domain (PePHD) region spans residues 660 to 671 (AELSPLLLSTTQ). A helical membrane pass occupies residues 726–746 (LADARICACLWMMLLISQVEA). Over 747 to 757 (ALENLIVLNAA) the chain is Lumenal. A helical transmembrane segment spans residues 758 to 778 (SLAGTHGIVPFFIFFCAAWYL). Topologically, residues 779–781 (KGK) are cytoplasmic. A helical transmembrane segment spans residues 782 to 803 (WAPGLVYSVYGMWPLLLLLLAL). Over 804 to 813 (PQRAYALDQE) the chain is Lumenal. Residues 814-834 (LAASCGAVVFISLAVLTLSPY) form a helical membrane-spanning segment. Residues 835–838 (YKQY) are Cytoplasmic-facing. Residues 839-859 (MARGIWWLQYMLTRAEALLHV) form a helical membrane-spanning segment. At 860 to 881 (WVPSLNARGGRDGAILLMCVLH) the chain is on the lumenal side. A helical membrane pass occupies residues 882-902 (PHLLFDITKIMLAILGPLWIL). Residues 903–1026 (QASLLRVPYF…ALTDKGWRLL (124 aa)) enclose the Peptidase C18 domain. The Cytoplasmic portion of the chain corresponds to 903-1657 (QASLLRVPYF…CMSADLEVVT (755 aa)). Residues 904 to 1206 (ASLLRVPYFV…PVESLETTMR (303 aa)) are protease NS2-3. Residue C922 is the site of S-palmitoyl cysteine; by host attachment. The interaction with host SCPS1 stretch occupies residues 929-949 (AGGHYVQMALLKLGALTGTYI). Residues H952, E972, and C993 each act as for protease NS2 activity; shared with dimeric partner in the active site. The Peptidase S29 domain occupies 1027 to 1208 (APITAYAQQT…ESLETTMRSP (182 aa)). Catalysis depends on charge relay system; for serine protease NS3 activity residues H1083 and D1107. C1123 and C1125 together coordinate Zn(2+). S1165 (charge relay system; for serine protease NS3 activity) is an active-site residue. Residues C1171 and H1175 each coordinate Zn(2+). The region spanning 1217–1369 (PTVPQSYQVA…SNIEEVALSA (153 aa)) is the Helicase ATP-binding domain. 1230 to 1237 (APTGSGKS) lines the ATP pocket. Residues S1237 and E1317 each contribute to the Mg(2+) site. A DECH box motif is present at residues 1316–1319 (DECH). Residues 1486-1497 (QRRGRTGRGKHG) form an RNA-binding region. Residues 1658–1678 (STWVLVGGVLAALAAYCLSTG) traverse the membrane as a helical segment. The interval 1679–1690 (SVVIVGRIILGG) is NS3-binding. Topologically, residues 1679–1805 (SVVIVGRIIL…AVTSPLTTQQ (127 aa)) are cytoplasmic. The helical transmembrane segment at 1806-1824 (TLFFNILGGWVAAQLASPA) threads the bilayer. Topologically, residues 1825–1828 (AATA) are lumenal. A helical membrane pass occupies residues 1829–1849 (FVGAGITGAVVGSVGLGKVLV). Position 1850 (D1850) is a topological domain, cytoplasmic. Residues 1851–1871 (IIAGYGAGVAGALVAFKIMSG) form a helical membrane-spanning segment. At 1872–1881 (ETPTTEDLVN) the chain is on the lumenal side. The chain crosses the membrane as a helical span at residues 1882 to 1902 (LLPAILSPGALVVGVVCAAIL). The Cytoplasmic segment spans residues 1903-1972 (RRHVGPGEGA…WISSDCIAPC (70 aa)). S-palmitoyl cysteine; by host attachment occurs at residues C1968 and C1972. An intramembrane segment occupies 1973–2002 (ASSWLKDVWDWICEVLSDFKNWLKAKLVPQ). Residues 2003-2990 (LPGIPFVSCQ…YHSVSHARPR (988 aa)) are Cytoplasmic-facing. Zn(2+) is bound by residues C2011, C2029, C2031, and C2052. Positions 2120–2208 (EFFTEVDGVR…ASSSASQLSA (89 aa)) are FKBP8-binding. Residues 2120 to 2332 (EFFTEVDGVR…PVPPPRRKRT (213 aa)) form a transcriptional activation region. The interaction with non-structural protein 4A stretch occupies residues 2135 to 2139 (PPCKP). Residues 2187 to 2219 (ARRLKRGSPPSLASSSASQLSAPSLKATCTTHH) are disordered. Residues 2189 to 2441 (RLKRGSPPSL…TPCASEEAKL (253 aa)) are interaction with host SKP2. S2194 carries the phosphoserine; by host; in p56 modification. A compositionally biased stretch (low complexity) spans 2194–2211 (SPPSLASSSASQLSAPSL). A phosphoserine; by host; in p58 mark is found at S2197, S2201, S2204, S2207, and S2210. An ISDR region spans residues 2210–2249 (SLKATCTTHHDSPDADLIEANLLWRQEMGGNITRVESENK). The segment at 2210–2275 (SLKATCTTHH…REISIPAEIL (66 aa)) is interaction with EIF2AK2/PKR. The segment at 2249–2306 (KIVVLDSFDPLVAEEDDREISIPAEILRKFKQFPPAMPIWARPDYNPPLVEPWKRPDY) is NS4B-binding. The SH3-binding signature appears at 2322-2325 (TPVP). The short motif at 2326 to 2334 (PPRRKRTVV) is the Nuclear localization signal element. K2350 is covalently cross-linked (Glycyl lysine isopeptide (Lys-Gly) (interchain with G-Cter in ubiquitin)). The span at 2352–2369 (FGSSTTSGVTSGEATESS) shows a compositional bias: low complexity. Positions 2352–2409 (FGSSTTSGVTSGEATESSPAPSCGGELDSEAESYSSMPPLEGEPGDPDLSDGSWSTVS) are disordered. The V3 stretch occupies residues 2354–2377 (SSTTSGVTSGEATESSPAPSCGGE). Phosphoserine; by host is present on residues S2449 and S2462. One can recognise a RdRp catalytic domain in the interval 2634–2752 (PMGFSYDTRC…ICESAGVQED (119 aa)). 3 residues coordinate Mg(2+): D2640, D2738, and D2739. A helical membrane pass occupies residues 2991–3011 (LFLWCLLLLSVGVGIYLLPNR).

This sequence belongs to the hepacivirus polyprotein family. Homooligomer. Interacts with E1 (via C-terminus). Interacts with the non-structural protein 5A. Interacts (via N-terminus) with host STAT1 (via SH2 domain); this interaction results in decreased STAT1 phosphorylation and ubiquitin-mediated proteasome-dependent STAT1 degradation, leading to decreased IFN-stimulated gene transcription. Interacts with host STAT3; this interaction constitutively activates STAT3. Interacts with host LTBR receptor. Interacts with host TNFRSF1A receptor and possibly induces apoptosis. Interacts with host HNRPK. Interacts with host YWHAE. Interacts with host UBE3A/E6AP. Interacts with host DDX3X. Interacts with host APOA2. Interacts with host RXRA protein. Interacts with host SP110 isoform 3/Sp110b; this interaction sequesters the transcriptional corepressor SP110 away from the nucleus. Interacts with host CREB3 nuclear transcription protein; this interaction triggers cell transformation. Interacts with host ACY3. Interacts with host C1QR1. Interacts with host RBM24; this interaction, which enhances the interaction of the mature core protein with 5'-UTR, may inhibit viral translation and favor replication. Interacts with host EIF2AK2/PKR; this interaction induces the autophosphorylation of EIF2AK2. Part of the viral assembly initiation complex composed of NS2, E1, E2, NS3, NS4A, NS5A and the mature core protein. As to quaternary structure, forms a heterodimer with envelope glycoprotein E2. Interacts with mature core protein. Interacts with protease NS2. The heterodimer E1/E2 interacts with host CLDN1; this interaction plays a role in viral entry into host cell. Interacts with host SPSB2 (via C-terminus). Part of the viral assembly initiation complex composed of NS2, E1, E2, NS3, NS4A, NS5A and the mature core protein. Interacts with host NEURL3; this interaction prevents E1 binding to glycoprotein E2. In terms of assembly, forms a heterodimer with envelope glycoprotein E1. Interacts with host CD81 and SCARB1 receptors; these interactions play a role in viral entry into host cell. Interacts with host EIF2AK2/PKR; this interaction inhibits EIF2AK2 and probably allows the virus to evade the innate immune response. Interacts with host CD209/DC-SIGN and CLEC4M/DC-SIGNR. Interact with host SPCS1; this interaction is essential for viral particle assembly. Interacts with protease NS2. The heterodimer E1/E2 interacts with host CLDN1; this interaction plays a role in viral entry into host cell. Part of the viral assembly initiation complex composed of NS2, E1, E2, NS3, NS4A, NS5A and the mature core protein. Interacts with host SLC3A2/4F2hc; the interaction may facilitate viral entry into host cell. Interacts with human PLSCR1. Homohexamer. Homoheptamer. Interacts with protease NS2. As to quaternary structure, homodimer. Interacts with host SPCS1; this interaction is essential for viral particle assembly. Interacts with envelope glycoprotein E1. Interacts with envelope glycoprotein E2. Interacts with viroporin p7. Interacts with serine protease/helicase NS3. Part of the replication complex composed of NS2, NS3, NS4A, NS4B, NS5A and the RNA-directed RNA polymerase embedded in an ER-derived membranous web. Part of the viral assembly initiation complex composed of NS2, E1, E2, NS3, NS4A, NS5A and the mature core protein. In terms of assembly, interacts with protease NS2. Interacts with non-structural protein 4A; this interaction stabilizes the folding of NS3 serine protease. NS3-NS4A interaction is essential for NS3 activation and allows membrane anchorage of the latter. NS3/NS4A complex also prevents phosphorylation of host IRF3, thus preventing the establishment of dsRNA induced antiviral state. Interacts with host MAVS; this interaction leads to the cleavage and inhibition of host MAVS. Interacts with host TICAM1; this interaction leads to the cleavage and inhibition of host TICAM1. Interacts with host TANK-binding kinase/TBK1; this interaction results in the inhibition of the association between TBK1 and IRF3, which leads to the inhibition of IRF3 activation. Interacts with host RBM24. Part of the replication complex composed of NS2, NS3, NS4A, NS4B, NS5A and the RNA-directed RNA polymerase embedded in an ER-derived membranous web. Part of the viral assembly initiation complex composed of NS2, E1, E2, NS3, NS4A, NS5A and the mature core protein. Interacts with NS3 serine protease; this interaction stabilizes the folding of NS3 serine protease. NS3-NS4A interaction is essential for NS3 activation and allows membrane anchorage of the latter. Interacts with non-structural protein 5A (via N-terminus). Part of the replication complex composed of NS2, NS3, NS4A, NS4B, NS5A and the RNA-directed RNA polymerase embedded in an ER-derived membranous web. Part of the viral assembly initiation complex composed of NS2, E1, E2, NS3, NS4A, NS5A and the mature core protein. As to quaternary structure, homomultimer. Interacts with non-structural protein NS5A. Interacts with host PLA2G4C; this interaction likely initiates the recruitment of replication complexes to lipid droplets. Interacts with host STING; this interaction disrupts the interaction between STING and TBK1 thereby suppressing the interferon signaling. Part of the replication complex composed of NS2, NS3, NS4A, NS4B, NS5A and the RNA-directed RNA polymerase embedded in an ER-derived membranous web. In terms of assembly, monomer. Homodimer; dimerization is required for RNA-binding. Interacts with the mature core protein. Interacts (via N-terminus) with non-structural protein 4A. Interacts with non-structural protein 4B. Interacts (via region D2) with RNA-directed RNA polymerase. Part of the viral assembly initiation complex composed of NS2, E1, E2, NS3, NS4A, NS5A and the mature core protein. Part of the replication complex composed of NS2, NS3, NS4A, NS4B, NS5A and the RNA-directed RNA polymerase embedded in an ER-derived membranous web. Interacts with host GRB2. Interacts with host BIN1. Interacts with host PIK3R1. Interacts with host SRCAP. Interacts with host FKBP8. Interacts (via C-terminus) with host VAPB (via MSP domain). Interacts with host EIF2AK2/PKR; this interaction leads to disruption of EIF2AK2 dimerization by NS5A and probably allows the virus to evade the innate immune response. Interacts (via N-terminus) with host PACSIN2 (via N-terminus); this interaction attenuates protein kinase C alpha-mediated phosphorylation of PACSIN2 by disrupting the interaction between PACSIN2 and PRKCA. Interacts (via N-terminus) with host SRC kinase (via SH2 domain). Interacts with most Src-family kinases. Interacts with host IFI27 and SKP2; promotes the ubiquitin-mediated proteasomal degradation of NS5A. Interacts with host GPS2. Interacts with host TNFRSF21; this interaction allows the modulation by the virus of JNK, p38 MAPK, STAT3, and Akt signaling pathways in a DR6-dependent manner. Interacts (via N-terminus) with host CIDEB (via N-terminus); this interaction seems to regulate the association of HCV particles with APOE. Interacts with host CHKA/Choline Kinase-alpha; CHKA bridges host PI4KA and NS5A and potentiates NS5A-stimulated PI4KA activity, which then facilitates the targeting of the ternary complex to the ER for viral replication. Interacts with host SPSB2 (via C-terminus); this interaction targets NS5A for ubiquitination and degradation. Interacts with host RAB18; this interaction may promote the association of NS5A and other replicase components with lipid droplets. Interacts (via region D2) with host PPIA/CYPA; the interaction stimulates RNA-binding ability of NS5A and is dependent on the peptidyl-prolyl cis-trans isomerase activity of PPIA/CYPA. Interacts with host TRIM14; this interaction induces the degradation of NS5A. Homooligomer. Interacts with non-structural protein 5A. Interacts with host VAPB. Interacts with host PRK2/PKN2. Interacts with host HNRNPA1 and SEPT6; these interactions facilitate viral replication. Part of the replication complex composed of NS2, NS3, NS4A, NS4B, NS5A and the RNA-directed RNA polymerase. Requires Zn(2+) as cofactor. Mg(2+) is required as a cofactor. Post-translationally, specific enzymatic cleavages in vivo yield mature proteins. The structural proteins, core, E1, E2 and p7 are produced by proteolytic processing by host signal peptidases. The core protein precursor is synthesized as a 23 kDa, which is retained in the ER membrane through the hydrophobic signal peptide. Cleavage by the signal peptidase releases the 21 kDa mature core protein. The cleavage of the core protein precursor occurs between aminoacids 176 and 188 but the exact cleavage site is not known. Some degraded forms of the core protein appear as well during the course of infection. The other proteins (p7, NS2, NS3, NS4A, NS4B, NS5A and NS5B) are cleaved by the viral proteases. Autoprocessing between NS2 and NS3 is mediated by the NS2 cysteine protease catalytic domain and regulated by the NS3 N-terminal domain. In terms of processing, phosphorylated by host PKC and PKA. Ubiquitinated; mediated by UBE3A and leading to core protein subsequent proteasomal degradation. Post-translationally, highly N-glycosylated. In terms of processing, palmitoylation is required for NS2/3 autoprocessing and E2 recruitment to membranes. Palmitoylated. This modification may play a role in its polymerization or in protein-protein interactions. Post-translationally, phosphorylated on serines in a basal form termed p56. p58 is a hyperphosphorylated form of p56. p56 and p58 coexist in the cell in roughly equivalent amounts. Hyperphosphorylation is dependent on the presence of NS4A. Host CSNK1A1/CKI-alpha or RPS6KB1 kinases may be responsible for NS5A phosphorylation. In terms of processing, tyrosine phosphorylation is essential for the interaction with host SRC. The N-terminus is phosphorylated by host PRK2/PKN2.

The protein localises to the host endoplasmic reticulum membrane. Its subcellular location is the host mitochondrion membrane. It localises to the virion. The protein resides in the host cytoplasm. It is found in the host nucleus. The protein localises to the host lipid droplet. Its subcellular location is the virion membrane. It localises to the host mitochondrion. The protein resides in the host cell membrane. It is found in the host perinuclear region. It carries out the reaction Hydrolysis of four peptide bonds in the viral precursor polyprotein, commonly with Asp or Glu in the P6 position, Cys or Thr in P1 and Ser or Ala in P1'.. It catalyses the reaction a ribonucleoside 5'-triphosphate + H2O = a ribonucleoside 5'-diphosphate + phosphate + H(+). The catalysed reaction is ATP + H2O = ADP + phosphate + H(+). The enzyme catalyses RNA(n) + a ribonucleoside 5'-triphosphate = RNA(n+1) + diphosphate. Its activity is regulated as follows. Inhibited by the antiviral drug hexamethylene amiloride. Inhibition by amantadine appears to be genotype-dependent. Also inhibited by long-alkyl-chain iminosugar derivatives. Activity is up-regulated by PRK2/PKN2-mediated phosphorylation. Functionally, packages viral RNA to form a viral nucleocapsid, and promotes virion budding. Participates in the viral particle production as a result of its interaction with the non-structural protein 5A. Binds RNA and may function as a RNA chaperone to induce the RNA structural rearrangements taking place during virus replication. Modulates viral translation initiation by interacting with viral IRES and 40S ribosomal subunit. Affects various cell signaling pathways, host immunity and lipid metabolism. Prevents the establishment of cellular antiviral state by blocking the interferon-alpha/beta (IFN-alpha/beta) and IFN-gamma signaling pathways and by blocking the formation of phosphorylated STAT1 and promoting ubiquitin-mediated proteasome-dependent degradation of STAT1. Activates STAT3 leading to cellular transformation. Regulates the activity of cellular genes, including c-myc and c-fos. May repress the promoter of p53, and sequester CREB3 and SP110 isoform 3/Sp110b in the cytoplasm. Represses cell cycle negative regulating factor CDKN1A, thereby interrupting an important check point of normal cell cycle regulation. Targets transcription factors involved in the regulation of inflammatory responses and in the immune response: suppresses TNF-induced NF-kappa-B activation, and activates AP-1. Binds to dendritic cells (DCs) via C1QR1, resulting in down-regulation of T-lymphocytes proliferation. Alters lipid metabolism by interacting with hepatocellular proteins involved in lipid accumulation and storage. Induces up-regulation of FAS promoter activity, and thereby contributes to the increased triglyceride accumulation in hepatocytes (steatosis). Forms a heterodimer with envelope glycoprotein E2, which mediates virus attachment to the host cell, virion internalization through clathrin-dependent endocytosis and fusion with host membrane. Fusion with the host cell is most likely mediated by both E1 and E2, through conformational rearrangements of the heterodimer required for fusion rather than a classical class II fusion mechanism. E1/E2 heterodimer binds host apolipoproteins such as APOB and ApoE thereby forming a lipo-viro-particle (LVP). APOE associated to the LVP allows the initial virus attachment to cell surface receptors such as the heparan sulfate proteoglycans (HSPGs), syndecan-1 (SDC1), syndecan-1 (SDC2), the low-density lipoprotein receptor (LDLR) and scavenger receptor class B type I (SCARB1). The cholesterol transfer activity of SCARB1 allows E2 exposure and binding of E2 to SCARB1 and the tetraspanin CD81. E1/E2 heterodimer binding on CD81 activates the epithelial growth factor receptor (EGFR) signaling pathway. Diffusion of the complex E1-E2-EGFR-SCARB1-CD81 to the cell lateral membrane allows further interaction with Claudin 1 (CLDN1) and occludin (OCLN) to finally trigger HCV entry. In terms of biological role, forms a heterodimer with envelope glycoprotein E1, which mediates virus attachment to the host cell, virion internalization through clathrin-dependent endocytosis and fusion with host membrane. Fusion with the host cell is most likely mediated by both E1 and E2, through conformational rearrangements of the heterodimer required for fusion rather than a classical class II fusion mechanism. The interaction between envelope glycoprotein E2 and host apolipoprotein E/APOE allows the proper assembly, maturation and infectivity of the viral particles. This interaction is probably promoted via the up-regulation of cellular autophagy by the virus. E1/E2 heterodimer binds host apolipoproteins such as APOB and APOE thereby forming a lipo-viro-particle (LVP). APOE associated to the LVP allows the initial virus attachment to cell surface receptors such as the heparan sulfate proteoglycans (HSPGs), syndecan-1 (SDC1), syndecan-1 (SDC2), the low-density lipoprotein receptor (LDLR) and scavenger receptor class B type I (SCARB1). The cholesterol transfer activity of SCARB1 allows E2 exposure and binding of E2 to SCARB1 and the tetraspanin CD81. E1/E2 heterodimer binding on CD81 activates the epithelial growth factor receptor (EGFR) signaling pathway. Diffusion of the complex E1-E2-EGFR-SCARB1-CD81 to the cell lateral membrane allows further interaction with Claudin 1 (CLDN1) and occludin (OCLN) to finally trigger HCV entry. Inhibits host EIF2AK2/PKR activation, preventing the establishment of an antiviral state. Viral ligand for CD209/DC-SIGN and CLEC4M/DC-SIGNR, which are respectively found on dendritic cells (DCs), and on liver sinusoidal endothelial cells and macrophage-like cells of lymph node sinuses. These interactions allow the capture of circulating HCV particles by these cells and subsequent facilitated transmission to permissive cells such as hepatocytes and lymphocyte subpopulations. The interaction between E2 and host amino acid transporter complex formed by SLC3A2 and SLC7A5/LAT1 may facilitate viral entry into host cell. Its function is as follows. Ion channel protein that acts as a viroporin and plays an essential role in the assembly, envelopment and secretion of viral particles. Regulates the host cell secretory pathway, which induces the intracellular retention of viral glycoproteins and favors assembly of viral particles. Creates a pore in acidic organelles and releases Ca(2+) and H(+) in the cytoplasm of infected cells, leading to a productive viral infection. High levels of cytoplasmic Ca(2+) may trigger membrane trafficking and transport of viral ER-associated proteins to viroplasms, sites of viral genome replication. This ionic imbalance induces the assembly of the inflammasome complex, which triggers the maturation of pro-IL-1beta into IL-1beta through the action of caspase-1. Targets also host mitochondria and induces mitochondrial depolarization. In addition of its role as a viroporin, acts as a lipid raft adhesion factor. Functionally, cysteine protease required for the proteolytic auto-cleavage between the non-structural proteins NS2 and NS3. The N-terminus of NS3 is required for the function of NS2 protease (active region NS2-3). Promotes the initiation of viral particle assembly by mediating the interaction between structural and non-structural proteins. Displays three enzymatic activities: serine protease with a chymotrypsin-like fold, NTPase and RNA helicase. NS3 serine protease, in association with NS4A, is responsible for the cleavages of NS3-NS4A, NS4A-NS4B, NS4B-NS5A and NS5A-NS5B. The NS3/NS4A complex prevents phosphorylation of host IRF3, thus preventing the establishment of dsRNA induced antiviral state. The NS3/NS4A complex induces host amino acid transporter component SLC3A2, thus contributing to HCV propagation. NS3 RNA helicase binds to RNA and unwinds both dsDNA and dsRNA in the 3' to 5' direction, and likely resolves RNA complicated stable secondary structures in the template strand. Binds a single ATP and catalyzes the unzipping of a single base pair of dsRNA. Inhibits host antiviral proteins TBK1 and IRF3 thereby preventing the establishment of an antiviral state. Cleaves host MAVS/CARDIF thereby preventing the establishment of an antiviral state. Cleaves host TICAM1/TRIF, thereby disrupting TLR3 signaling and preventing the establishment of an antiviral state. In terms of biological role, induces a specific membrane alteration that serves as a scaffold for the virus replication complex. This membrane alteration gives rise to the so-called ER-derived membranous web that contains the replication complex. NS4B self-interaction contributes to its function in membranous web formation. Promotes host TRIF protein degradation in a CASP8-dependent manner thereby inhibiting host TLR3-mediated interferon signaling. Disrupts the interaction between STING and TBK1 contributing to the inhibition of interferon signaling. Its function is as follows. Phosphorylated protein that is indispensable for viral replication and assembly. Both hypo- and hyperphosphorylated states are required for the viral life cycle. The hyperphosphorylated form of NS5A is an inhibitor of viral replication. Involved in RNA-binding and especially in binding to the viral genome. Zinc is essential for RNA-binding. Participates in the viral particle production as a result of its interaction with the mature viral core protein. Its interaction with host VAPB may target the viral replication complex to vesicles. Down-regulates viral IRES translation initiation. Mediates interferon resistance, presumably by interacting with and inhibiting host EIF2AK2/PKR. Prevents BIN1-induced apoptosis. Acts as a transcriptional activator of some host genes important for viral replication when localized in the nucleus. Via the interaction with host PACSIN2, modulates lipid droplet formation in order to promote virion assembly. Modulates TNFRSF21/DR6 signaling pathway for viral propagation. Functionally, RNA-dependent RNA polymerase that performs primer-template recognition and RNA synthesis during viral replication. Initiates RNA transcription/replication at a flavin adenine dinucleotide (FAD), resulting in a 5'- FAD cap on viral RNAs. In this way, recognition of viral 5' RNA by host pattern recognition receptors can be bypassed, thereby evading activation of antiviral pathways. This chain is Genome polyprotein, found in Hepatitis C virus genotype 1c (isolate India) (HCV).